A 95-amino-acid polypeptide reads, in one-letter code: Large ribosomal subunit protein bL25 (95 aa).

This sequence belongs to the bacterial ribosomal protein bL25 family. Part of the 50S ribosomal subunit; part of the 5S rRNA/L5/L18/L25 subcomplex. Contacts the 5S rRNA. Binds to the 5S rRNA independently of L5 and L18.

Functionally, this is one of the proteins that binds to the 5S RNA in the ribosome where it forms part of the central protuberance. The chain is Large ribosomal subunit protein bL25 from Haemophilus influenzae (strain 86-028NP).